Reading from the N-terminus, the 372-residue chain is Ubl carboxyl-terminal hydrolase 18 (372 aa).

The disordered stretch occupies residues 19 to 45; it reads SSQSPADLEEKKEEDSNMKREQPRERP. Basic and acidic residues predominate over residues 26 to 45; sequence LEEKKEEDSNMKREQPRERP. A mediates interaction with IFNAR2 region spans residues 36 to 51; sequence MKREQPRERPRAWDYP. The mediates interaction with STAT2 stretch occupies residues 51–112; it reads PHGLVGLHNI…MLLLLEKMQD (62 aa). Residues 55-370 enclose the USP domain; it reads VGLHNIGQTC…TAYLLVYMKM (316 aa). Cys64 acts as the Nucleophile in catalysis. Residues 303–312 form a mediates interaction with STAT2 and necessary for the negative regulation of the type I IFN signaling pathway region; it reads ELFAVIAHVG. The interval 313-372 is mediates interaction with IFNAR2; the sequence is MADSGHYCVYIRNAVDGKWFCFNDSNICLVSWEDIQCTYGNPNYHWQETAYLLVYMKMEC. His318 acts as the Proton acceptor in catalysis.

Belongs to the peptidase C19 family. In terms of assembly, interacts with STAT2; the interaction is direct. Interacts with IFNAR2; indirectly via STAT2, it negatively regulates the assembly of the ternary interferon-IFNAR1-IFNAR2 complex and inhibits type I interferon signaling. Interacts with STING1. Interacts with USP20.

It localises to the cytoplasm. It is found in the nucleus. The catalysed reaction is Thiol-dependent hydrolysis of ester, thioester, amide, peptide and isopeptide bonds formed by the C-terminal Gly of ubiquitin (a 76-residue protein attached to proteins as an intracellular targeting signal).. Its function is as follows. Interferon-induced ISG15-specific protease that plays a crucial role for maintaining a proper balance of ISG15-conjugated proteins in cells. Regulates protein ISGylation by efficiently cleaving ISG15 conjugates linked via isopeptide bonds. Regulates T-cell activation and T-helper 17 (Th17) cell differentiation by deubiquitinating TAK1, likely to keep TAK1-TAB complexes in steady conditions. In turn, restricts activation of NF-kappa-B, NFAT, and JNK as well as expression of IL2 in T-cells after TCR activation. Acts as a molecular adapter with USP20 to promote innate antiviral response through deubiquitinating STING1. Involved also in the negative regulation of the inflammatory response triggered by type I interferon. Upon recruitment by STAT2 to the type I interferon receptor subunit IFNAR2 interferes with the assembly of the ternary interferon-IFNAR1-IFNAR2 complex and acts as a negative regulator of the type I interferon signaling pathway. In terms of biological role, has enzymatic activity similar to isoform 1 and interferes with type I interferon signaling. Major deISGylation enzyme for nuclear proteins. The protein is Ubl carboxyl-terminal hydrolase 18 (USP18) of Homo sapiens (Human).